The chain runs to 108 residues: Long neurotoxin 13 (108 aa).

A signal peptide spans 1-21 (MKTLLLTLVVVTIVCLDLAYT). 5 disulfides stabilise this stretch: C24–C42, C35–C63, C48–C52, C67–C78, and C79–C84.

The protein belongs to the three-finger toxin family. Long-chain subfamily. Type II alpha-neurotoxin sub-subfamily. As to expression, expressed by the venom gland.

The protein localises to the secreted. Binds with high affinity to muscular (alpha-1/CHRNA1) and neuronal (alpha-7/CHRNA7) nicotinic acetylcholine receptor (nAChR) and inhibits acetylcholine from binding to the receptor, thereby impairing neuromuscular and neuronal transmission. The protein is Long neurotoxin 13 of Drysdalia coronoides (White-lipped snake).